Reading from the N-terminus, the 82-residue chain is Cytochrome b-c1 complex subunit 8 (82 aa).

Topologically, residues 1–39 (MGREFGNLTRIRHVISYSLSPFEQRAFPHYFSKGIPNVL) are mitochondrial matrix. Phosphoserine is present on S16. Position 33 is an N6-acetyllysine; alternate (K33). At K33 the chain carries N6-succinyllysine; alternate. A helical transmembrane segment spans residues 40–68 (RRTRERILRVAPPFVLFYLIYTWGNQEFA). The Mitochondrial intermembrane portion of the chain corresponds to 69-82 (QSKRKNPAKYENDK).

It belongs to the UQCRQ/QCR8 family. Component of the ubiquinol-cytochrome c oxidoreductase (cytochrome b-c1 complex, complex III, CIII), a multisubunit enzyme composed of 11 subunits. The complex is composed of 3 respiratory subunits cytochrome b, cytochrome c1 and Rieske protein UQCRFS1, 2 core protein subunits UQCRC1/QCR1 and UQCRC2/QCR2, and 6 low-molecular weight protein subunits UQCRH/QCR6, UQCRB/QCR7, UQCRQ/QCR8, UQCR10/QCR9, UQCR11/QCR10 and subunit 9, the cleavage product of Rieske protein UQCRFS1. The complex exists as an obligatory dimer and forms supercomplexes (SCs) in the inner mitochondrial membrane with NADH-ubiquinone oxidoreductase (complex I, CI) and cytochrome c oxidase (complex IV, CIV), resulting in different assemblies (supercomplex SCI(1)III(2)IV(1) and megacomplex MCI(2)III(2)IV(2)). Interacts with UQCC6.

It is found in the mitochondrion inner membrane. Functionally, component of the ubiquinol-cytochrome c oxidoreductase, a multisubunit transmembrane complex that is part of the mitochondrial electron transport chain which drives oxidative phosphorylation. The respiratory chain contains 3 multisubunit complexes succinate dehydrogenase (complex II, CII), ubiquinol-cytochrome c oxidoreductase (cytochrome b-c1 complex, complex III, CIII) and cytochrome c oxidase (complex IV, CIV), that cooperate to transfer electrons derived from NADH and succinate to molecular oxygen, creating an electrochemical gradient over the inner membrane that drives transmembrane transport and the ATP synthase. The cytochrome b-c1 complex catalyzes electron transfer from ubiquinol to cytochrome c, linking this redox reaction to translocation of protons across the mitochondrial inner membrane, with protons being carried across the membrane as hydrogens on the quinol. In the process called Q cycle, 2 protons are consumed from the matrix, 4 protons are released into the intermembrane space and 2 electrons are passed to cytochrome c. The sequence is that of Cytochrome b-c1 complex subunit 8 (Uqcrq) from Rattus norvegicus (Rat).